We begin with the raw amino-acid sequence, 158 residues long: Snaclec alboaggregin-D subunit alpha (158 aa).

An N-terminal signal peptide occupies residues 1-23; that stretch reads MGRFIFGSFGLLVVFLSLSGTGA. Intrachain disulfides connect Cys-27/Cys-38, Cys-55/Cys-152, and Cys-127/Cys-144. Positions 34–153 constitute a C-type lectin domain; sequence YDRYCYQAFS…CAELNPFICK (120 aa).

This sequence belongs to the snaclec family. In terms of assembly, tetramer of heterodimers of alpha and beta subunits (alphabeta)(4); disulfide-linked. As to expression, expressed by the venom gland.

Its subcellular location is the secreted. Its function is as follows. Snaclec that induces human platelet aggregation in the absence of any cofactor with the EC(50) of 0.25 nM and causes tyrosine phosphorylation in human platelets. Antibodies against either platelet GPIbalpha (GP1BA) or GPVI (GP6) inhibit alboaggregin D-induced platelet aggregation. Only the combination of these two antibodies completely inhibit aggregation, suggesting that it acts through both GPIbalpha (GP1BA) and GPVI (GP6). The protein is Snaclec alboaggregin-D subunit alpha of Trimeresurus albolabris (White-lipped pit viper).